Here is a 116-residue protein sequence, read N- to C-terminus: Large ribosomal subunit protein uL18 (116 aa).

It belongs to the universal ribosomal protein uL18 family. As to quaternary structure, part of the 50S ribosomal subunit; part of the 5S rRNA/L5/L18/L25 subcomplex. Contacts the 5S and 23S rRNAs.

In terms of biological role, this is one of the proteins that bind and probably mediate the attachment of the 5S RNA into the large ribosomal subunit, where it forms part of the central protuberance. The polypeptide is Large ribosomal subunit protein uL18 (Saccharophagus degradans (strain 2-40 / ATCC 43961 / DSM 17024)).